A 316-amino-acid polypeptide reads, in one-letter code: Acetaldehyde dehydrogenase (316 aa).

11–14 serves as a coordination point for NAD(+); the sequence is SGNI. The Acyl-thioester intermediate role is filled by Cys-131. NAD(+)-binding positions include 162 to 170 and Asn-289; that span reads SAGPGTRAN.

This sequence belongs to the acetaldehyde dehydrogenase family. In terms of assembly, interacts with MhpE.

The catalysed reaction is acetaldehyde + NAD(+) + CoA = acetyl-CoA + NADH + H(+). Its pathway is aromatic compound metabolism; 3-phenylpropanoate degradation. In terms of biological role, catalyzes the conversion of acetaldehyde to acetyl-CoA, using NAD(+) and coenzyme A. Is the final enzyme in the meta-cleavage pathway for the degradation of aromatic compounds. This is Acetaldehyde dehydrogenase from Escherichia coli O81 (strain ED1a).